The following is a 78-amino-acid chain: Small ribosomal subunit protein bS20 (78 aa).

The disordered stretch occupies residues 55-78 (KSKGLIHKNKASRDKARLASKLAK).

This sequence belongs to the bacterial ribosomal protein bS20 family.

In terms of biological role, binds directly to 16S ribosomal RNA. The chain is Small ribosomal subunit protein bS20 from Streptococcus mutans serotype c (strain ATCC 700610 / UA159).